An 804-amino-acid chain; its full sequence is Endoplasmin (804 aa).

The first 21 residues, M1–A21, serve as a signal peptide directing secretion. Positions S42 to T44 match the SRT pseudosubstrate motif motif. Residue N62 is glycosylated (N-linked (GlcNAc...) asparagine). S64 bears the Phosphoserine mark. N107 carries N-linked (GlcNAc...) asparagine glycosylation. 3 residues coordinate ATP: N107, D149, and N162. K168 carries the N6-(2-hydroxyisobutyryl)lysine modification. A Phosphoserine modification is found at S172. F199 contributes to the ATP binding site. An N-linked (GlcNAc...) asparagine glycan is attached at N217. The disordered stretch occupies residues T288 to T323. Acidic residues predominate over residues V289–E317. 2 positions are modified to phosphoserine: S306 and S403. An N6-succinyllysine modification is found at K404. N445 carries N-linked (GlcNAc...) asparagine glycosylation. S447 bears the Phosphoserine mark. K479 carries the N6-acetyllysine modification. N481 and N502 each carry an N-linked (GlcNAc...) asparagine glycan. Position 633 is an N6-succinyllysine (K633). Positions D750–L804 are disordered. The segment covering E757 to Q791 has biased composition (acidic residues). T786 is subject to Phosphothreonine. Residues E792–L804 are compositionally biased toward basic and acidic residues. Positions K801–L804 match the Prevents secretion from ER motif.

Belongs to the heat shock protein 90 family. In terms of assembly, homodimer; disulfide-linked. Component of an EIF2 complex at least composed of CELF1/CUGBP1, CALR, CALR3, EIF2S1, EIF2S2, HSP90B1 and HSPA5. Part of a large chaperone multiprotein complex comprising DNAJB11, HSP90B1, HSPA5, HYOU, PDIA2, PDIA4, PDIA6, PPIB, SDF2L1, UGGT1 and very small amounts of ERP29, but not, or at very low levels, CALR nor CANX. Interacts with AIMP1; regulates its retention in the endoplasmic reticulum. Hyperglycosylated form interacts with OS9; promoting its degradation by the endoplasmic reticulum associated degradation (ERAD). Interacts with CNPY3. This interaction is disrupted in the presence of ATP. Interacts with TLR4 and TLR9, but not with TLR3. Interacts with MZB1 in a calcium-dependent manner. Interacts with METTL23. Interacts with IL1B; the interaction facilitates cargo translocation into the ERGIC. Interacts with EIF2AK3. Post-translationally, phosphorylated by CK2. In terms of processing, N-glycosylated cotranslationally at Asn-217 by STT3A-containing OST-A complex: this glycosylation is constitutive. In response to various stress, 5 additional facultative sites (Asn-62, Asn-107, Asn-445, Asn-481 and Asn-502) can be glycosylated post-translationally by STT3B-containing OST-B complex, leading to a hyperglycosylated form that is degraded by the ER-associated degradation (ERAD) pathway. In normal conditions, the OST-A complex together with CCDC134 prevent glycosylation at facultative sites during protein folding, thereby preventing hyperglycosylation. Mechanistically, nascent HSP90B1 is tethered during translation to a specialized CCDC134-containing translocon that forms a microenvironment for its folding, in which STT3A associates with the SRT pseudosubstrate motif, and prevents access to facultative glycosylation sites until folding is completed, rendering its facultative sites inaccessible to the OST-B complex.

Its subcellular location is the endoplasmic reticulum lumen. It localises to the sarcoplasmic reticulum lumen. The protein localises to the melanosome. It carries out the reaction ATP + H2O = ADP + phosphate + H(+). In terms of biological role, ATP-dependent chaperone involved in the processing of proteins in the endoplasmic reticulum, regulating their transport. Together with MESD, acts as a modulator of the Wnt pathway by promoting the folding of LRP6, a coreceptor of the canonical Wnt pathway. When associated with CNPY3, required for proper folding of Toll-like receptors. Promotes folding and trafficking of TLR4 to the cell surface. May participate in the unfolding of cytosolic leaderless cargos (lacking the secretion signal sequence) such as the interleukin 1/IL-1 to facilitate their translocation into the ERGIC (endoplasmic reticulum-Golgi intermediate compartment) and secretion; the translocation process is mediated by the cargo receptor TMED10. This Pongo abelii (Sumatran orangutan) protein is Endoplasmin (HSP90B1).